We begin with the raw amino-acid sequence, 381 residues long: CD209 antigen (381 aa).

The Cytoplasmic segment spans residues 1–37; sequence MSDSKEPRLQQLGLLEEEQLGGVGFRQTRGYKSLAGC. Short sequence motifs (endocytosis signal) lie at residues 14–15, 16–18, and 31–34; these read LL, EEE, and YKSL. The helical; Signal-anchor for type II membrane protein transmembrane segment at 38 to 58 threads the bilayer; sequence LGHGPLVLQLLSFTLLAGLLV. Over 59-381 the chain is Extracellular; that stretch reads QVSKVPSSLS…TPTTPNPPPE (323 aa). N-linked (GlcNAc...) asparagine glycosylation occurs at asparagine 80. A run of 6 repeats spans residues 96–118, 119–141, 142–164, 165–187, 188–210, and 211–234. The tract at residues 96 to 303 is 6 X approximate tandem repeats; the sequence is KQQEIYQELT…GLSDLNHEGT (208 aa). 3 cysteine pairs are disulfide-bonded: cysteine 233–cysteine 244, cysteine 261–cysteine 354, and cysteine 333–cysteine 346. Positions 240 to 355 constitute a C-type lectin domain; the sequence is FQGNCYFMSN…CNLAKFWICK (116 aa). Positions 324, 326, 328, 331, 342, and 343 each coordinate Ca(2+). The segment at 359–381 is disordered; sequence ASCSGDEERLLSPTPTTPNPPPE.

As to quaternary structure, homotetramer. Interacts with C1QBP; the interaction is indicative for a C1q:C1QBP:CD209 signaling complex. Interacts with ICAM2 and ICAM3 by binding to mannose-like carbohydrates. Interacts (via C-type lectin domain) with CEACAM1 (via Lewis X moieties); this interaction is regulated by the glycosylation pattern of CEACAM1 on cell types and regulates contact between dendritic cells and neutrophils. In terms of tissue distribution, expressed in lymph nodes.

It is found in the membrane. Functionally, pathogen-recognition receptor expressed on the surface of immature dendritic cells (DCs) and involved in initiation of primary immune response. Thought to mediate the endocytosis of pathogens which are subsequently degraded in lysosomal compartments. The receptor returns to the cell membrane surface and the pathogen-derived antigens are presented to resting T-cells via MHC class II proteins to initiate the adaptive immune response. Probably recognizes in a calcium-dependent manner high mannose N-linked oligosaccharides in a variety of pathogen antigens. Its function is as follows. On DCs it is a high affinity receptor for ICAM2 and ICAM3 by binding to mannose-like carbohydrates. May act as a DC rolling receptor that mediates transendothelial migration of DC presursors from blood to tissues by binding endothelial ICAM2. Seems to regulate DC-induced T-cell proliferation by binding to ICAM3 on T-cells in the immunological synapse formed between DC and T-cells. This chain is CD209 antigen (CD209), found in Chlorocebus aethiops (Green monkey).